A 322-amino-acid chain; its full sequence is Transcription factor WRKY45-2 (322 aa).

A disordered region spans residues 67 to 110 (GGEGSEVQSEVTCGGGASAGGKRKAPAANRKANCRRRTQQSSGN). Positions 112–180 (VVVKNLDDGQ…YIGEHTCRDP (69 aa)) form a DNA-binding region, WRKY. The tract at residues 256–284 (SDQEEVLSSLTPGSSAARGGGVAGPFGPD) is disordered.

It belongs to the WRKY group III family. As to expression, expressed in aleurone cells.

The protein resides in the nucleus. In terms of biological role, transcriptional activator involved in defense responses against pathogens. Acts as a positive regulator of defense responses against the rice blast fungus Magnaporthe oryzae. Acts as a positive regulator of defense responses against the bacterial blight Xanthomonas oryzae pv oryzae (Xoo) and the bacterial streak Xanthomonas oryzae pv oryzicola (Xoc). Acts as a positive regulator of abscisic acid (ABA) signaling that suppresses growth of seedlings. Acts as a negative regulator of salt stress response. Acts as a negative regulator of cold stress response. Acts as a negative regulator of drought stress response. This is Transcription factor WRKY45-2 from Oryza sativa subsp. indica (Rice).